The following is a 248-amino-acid chain: MSFVVIIPARFSSTRLLGKPLVDINGKPMIVHVLERARESGAERIIVATDHEDVARAVEAAGGEVCMTRADHQSGTERLAEVVEKCGFSDDTVIVNVQGDEPMIPAVIIRQVAENLAQRQVGMATLAVPIHSAEEAFNPNAVKVVLDAEGYALYFSRATIPWDRDRFAKSLETVGDACLRHLGIYGYRAGFIRRYVSWQPSPLEHIEMLEQLRVLWYGEKIHVAVAKAVPGTGVDTADDLERVRAEMR.

It belongs to the KdsB family.

The protein resides in the cytoplasm. It carries out the reaction 3-deoxy-alpha-D-manno-oct-2-ulosonate + CTP = CMP-3-deoxy-beta-D-manno-octulosonate + diphosphate. It functions in the pathway nucleotide-sugar biosynthesis; CMP-3-deoxy-D-manno-octulosonate biosynthesis; CMP-3-deoxy-D-manno-octulosonate from 3-deoxy-D-manno-octulosonate and CTP: step 1/1. The protein operates within bacterial outer membrane biogenesis; lipopolysaccharide biosynthesis. Activates KDO (a required 8-carbon sugar) for incorporation into bacterial lipopolysaccharide in Gram-negative bacteria. The polypeptide is 3-deoxy-manno-octulosonate cytidylyltransferase (Salmonella paratyphi A (strain ATCC 9150 / SARB42)).